A 220-amino-acid chain; its full sequence is MSDGAFDAGRTGGLLRLSQWLSPAFPVSAYAYSHGLEAEICHGRVRDGADVAAWIEGVVRRGAGRTDAIVMLSAMQAGADLDRLHDLARALAGSRERWEETRDQGAALAATLAAMGEGDGVARAYPVALGAAAARLDLAADVVAALYLQSVVGNLVSAAVRFVPLGQAEGQRIVAGMQGAVADVAAEVVNCSIDDIAQAAFGADLAAMEHEGLEVRIFRT.

The protein belongs to the UreF family. In terms of assembly, ureD, UreF and UreG form a complex that acts as a GTP-hydrolysis-dependent molecular chaperone, activating the urease apoprotein by helping to assemble the nickel containing metallocenter of UreC. The UreE protein probably delivers the nickel.

It localises to the cytoplasm. In terms of biological role, required for maturation of urease via the functional incorporation of the urease nickel metallocenter. The chain is Urease accessory protein UreF from Jannaschia sp. (strain CCS1).